The chain runs to 860 residues: Leucine--tRNA ligase (860 aa).

The short motif at 42 to 52 is the 'HIGH' region element; sequence PYPSGRLHMGH. Positions 619–623 match the 'KMSKS' region motif; it reads KMSKS. Residue K622 coordinates ATP.

It belongs to the class-I aminoacyl-tRNA synthetase family.

It is found in the cytoplasm. The catalysed reaction is tRNA(Leu) + L-leucine + ATP = L-leucyl-tRNA(Leu) + AMP + diphosphate. This Escherichia coli O81 (strain ED1a) protein is Leucine--tRNA ligase.